The primary structure comprises 59 residues: Large ribosomal subunit protein uL30 (59 aa).

Belongs to the universal ribosomal protein uL30 family. As to quaternary structure, part of the 50S ribosomal subunit.

This is Large ribosomal subunit protein uL30 from Hydrogenobaculum sp. (strain Y04AAS1).